The following is a 532-amino-acid chain: Protein DETOXIFICATION 51 (532 aa).

The next 12 membrane-spanning stretches (helical) occupy residues 65–85, 98–118, 142–162, 176–196, 208–228, 238–258, 290–310, 316–336, 358–378, 395–415, 439–459, and 461–481; these read FPIA…MFFL, LAIA…ALGM, VVFL…VGKI, AQTY…LHPI, PVTL…LFLV, VAVA…CYVW, VSVC…GLLV, VAAM…PSSL, LTAT…AAFA, ILQL…GNCP, AFYL…GIGF, and GLWV…MYVV.

Belongs to the multi antimicrobial extrusion (MATE) (TC 2.A.66.1) family. In terms of tissue distribution, expressed in the meristematic regions. Mainly detected in tissues where cells were actively dividing, such as leaf primordia and young leaves, the junction between lateral root and the primary root, root cap, hydathodes, the junction between secondary inflorescence and the main inflorescence, young stamen and young siliques. Highly expressed at the junction between the hypocotyl and the root, and at the marginal areas of cotyledons and true leaves, coinciding with the locations of the hydathode. Also highly expressed at the basal regions of the newly emerged lateral roots. In the floral organs, mostly expressed at the style of the pistil.

The protein resides in the endosome membrane. The protein localises to the late endosome membrane. Functions as a multidrug and toxin extrusion transporter that negatively regulates plant disease resistance. Plays an important role in maintaining normal plant architecture, possibly by regulating local auxin biosynthesis. May act as a negative regulator of hypocotyl cell elongation in the light. The polypeptide is Protein DETOXIFICATION 51 (Arabidopsis thaliana (Mouse-ear cress)).